A 206-amino-acid chain; its full sequence is Large ribosomal subunit protein uL4 (206 aa).

Residues 46–78 (GNRAQKDREQVKHTTKKPWRQKGTGRARAGMSS) form a disordered region. Residues 58–70 (HTTKKPWRQKGTG) show a composition bias toward basic residues.

This sequence belongs to the universal ribosomal protein uL4 family. In terms of assembly, part of the 50S ribosomal subunit.

Its function is as follows. One of the primary rRNA binding proteins, this protein initially binds near the 5'-end of the 23S rRNA. It is important during the early stages of 50S assembly. It makes multiple contacts with different domains of the 23S rRNA in the assembled 50S subunit and ribosome. Functionally, forms part of the polypeptide exit tunnel. The chain is Large ribosomal subunit protein uL4 from Burkholderia cenocepacia (strain ATCC BAA-245 / DSM 16553 / LMG 16656 / NCTC 13227 / J2315 / CF5610) (Burkholderia cepacia (strain J2315)).